Consider the following 765-residue polypeptide: Transcription factor RFX3 (765 aa).

Residues 189-264 constitute a DNA-binding region (RFX-type winged-helix); the sequence is HLQWLLDNYE…YHYYGIRVKP (76 aa).

It belongs to the RFX family.

The protein resides in the nucleus. In terms of biological role, transcription factor required for ciliogenesis and islet cell differentiation during endocrine pancreas development. This chain is Transcription factor RFX3 (rfx3), found in Danio rerio (Zebrafish).